The chain runs to 1229 residues: DNA-directed RNA polymerase subunit beta (1229 aa).

The protein belongs to the RNA polymerase beta chain family. The RNAP catalytic core consists of 2 alpha, 1 beta, 1 beta' and 1 omega subunit. When a sigma factor is associated with the core the holoenzyme is formed, which can initiate transcription.

It carries out the reaction RNA(n) + a ribonucleoside 5'-triphosphate = RNA(n+1) + diphosphate. In terms of biological role, DNA-dependent RNA polymerase catalyzes the transcription of DNA into RNA using the four ribonucleoside triphosphates as substrates. In Roseiflexus sp. (strain RS-1), this protein is DNA-directed RNA polymerase subunit beta.